We begin with the raw amino-acid sequence, 615 residues long: Proteasome-associated ATPase (615 aa).

Residues 1 to 36 form a disordered region; sequence MSESERPEAGDGTDALGASPDTPLSSEDAAELEQLR. Residues 25–102 are a coiled coil; the sequence is SSEDAAELEQ…LREEVDRLGQ (78 aa). 302–307 is a binding site for ATP; that stretch reads GCGKTL. The tract at residues 614–615 is docks into pockets in the proteasome alpha-ring; sequence YL.

This sequence belongs to the AAA ATPase family. As to quaternary structure, homohexamer. Assembles into a hexameric ring structure that caps the 20S proteasome core. Strongly interacts with the prokaryotic ubiquitin-like protein Pup through a hydrophobic interface; the interacting region of ARC lies in its N-terminal coiled-coil domain. There is one Pup binding site per ARC hexamer ring. Upon ATP-binding, the C-terminus of ARC interacts with the alpha-rings of the proteasome core, possibly by binding to the intersubunit pockets.

Its pathway is protein degradation; proteasomal Pup-dependent pathway. ATPase which is responsible for recognizing, binding, unfolding and translocation of pupylated proteins into the bacterial 20S proteasome core particle. May be essential for opening the gate of the 20S proteasome via an interaction with its C-terminus, thereby allowing substrate entry and access to the site of proteolysis. Thus, the C-termini of the proteasomal ATPase may function like a 'key in a lock' to induce gate opening and therefore regulate proteolysis. This Mycolicibacterium gilvum (strain PYR-GCK) (Mycobacterium gilvum (strain PYR-GCK)) protein is Proteasome-associated ATPase.